Here is an 88-residue protein sequence, read N- to C-terminus: Small ribosomal subunit protein uS17 (88 aa).

It belongs to the universal ribosomal protein uS17 family. In terms of assembly, part of the 30S ribosomal subunit.

Its function is as follows. One of the primary rRNA binding proteins, it binds specifically to the 5'-end of 16S ribosomal RNA. This Nitratidesulfovibrio vulgaris (strain DSM 19637 / Miyazaki F) (Desulfovibrio vulgaris) protein is Small ribosomal subunit protein uS17.